Here is a 341-residue protein sequence, read N- to C-terminus: Anthranilate phosphoribosyltransferase (341 aa).

Residues glycine 79, 82-83 (GD), threonine 87, 89-92 (NIST), 107-115 (KHGNRSISS), and serine 119 each bind 5-phospho-alpha-D-ribose 1-diphosphate. Glycine 79 serves as a coordination point for anthranilate. Serine 91 is a binding site for Mg(2+). Residue asparagine 110 coordinates anthranilate. Position 164 (arginine 164) interacts with anthranilate. Mg(2+)-binding residues include aspartate 222 and glutamate 223.

The protein belongs to the anthranilate phosphoribosyltransferase family. As to quaternary structure, homodimer. Requires Mg(2+) as cofactor.

The enzyme catalyses N-(5-phospho-beta-D-ribosyl)anthranilate + diphosphate = 5-phospho-alpha-D-ribose 1-diphosphate + anthranilate. The protein operates within amino-acid biosynthesis; L-tryptophan biosynthesis; L-tryptophan from chorismate: step 2/5. In terms of biological role, catalyzes the transfer of the phosphoribosyl group of 5-phosphorylribose-1-pyrophosphate (PRPP) to anthranilate to yield N-(5'-phosphoribosyl)-anthranilate (PRA). This is Anthranilate phosphoribosyltransferase from Blochmanniella pennsylvanica (strain BPEN).